The sequence spans 407 residues: Argininosuccinate synthase (407 aa).

Residues 16–24 and A44 each bind ATP; that span reads AYSGGLDTS. Y96 and S101 together coordinate L-citrulline. Residue G126 coordinates ATP. Residues T128, N132, and D133 each contribute to the L-aspartate site. N132 provides a ligand contact to L-citrulline. R136, S185, S194, E270, and Y282 together coordinate L-citrulline.

This sequence belongs to the argininosuccinate synthase family. Type 1 subfamily. In terms of assembly, homotetramer.

The protein localises to the cytoplasm. The enzyme catalyses L-citrulline + L-aspartate + ATP = 2-(N(omega)-L-arginino)succinate + AMP + diphosphate + H(+). It participates in amino-acid biosynthesis; L-arginine biosynthesis; L-arginine from L-ornithine and carbamoyl phosphate: step 2/3. The sequence is that of Argininosuccinate synthase from Shewanella sp. (strain W3-18-1).